Here is a 323-residue protein sequence, read N- to C-terminus: o-succinylbenzoate synthase (323 aa).

K134 functions as the Proton donor in the catalytic mechanism. The Mg(2+) site is built by D162, E191, and D214. K236 functions as the Proton acceptor in the catalytic mechanism.

The protein belongs to the mandelate racemase/muconate lactonizing enzyme family. MenC type 1 subfamily. Requires a divalent metal cation as cofactor.

The enzyme catalyses (1R,6R)-6-hydroxy-2-succinyl-cyclohexa-2,4-diene-1-carboxylate = 2-succinylbenzoate + H2O. It functions in the pathway quinol/quinone metabolism; 1,4-dihydroxy-2-naphthoate biosynthesis; 1,4-dihydroxy-2-naphthoate from chorismate: step 4/7. It participates in quinol/quinone metabolism; menaquinone biosynthesis. Its function is as follows. Converts 2-succinyl-6-hydroxy-2,4-cyclohexadiene-1-carboxylate (SHCHC) to 2-succinylbenzoate (OSB). This is o-succinylbenzoate synthase from Yersinia enterocolitica serotype O:8 / biotype 1B (strain NCTC 13174 / 8081).